Here is a 416-residue protein sequence, read N- to C-terminus: 3-hydroxy-3-methylglutaryl coenzyme A reductase AN1593 (416 aa).

Glu103 serves as the catalytic Charge relay system. An N-linked (GlcNAc...) asparagine glycan is attached at Asn167. Lys236 (charge relay system) is an active-site residue. N-linked (GlcNAc...) asparagine glycosylation occurs at Asn277. Catalysis depends on Asp312, which acts as the Charge relay system. A helical membrane pass occupies residues 380–400 (LALLVAAGVLAGELSLCSALS). The Proton donor role is filled by His408.

It belongs to the HMG-CoA reductase family.

The protein resides in the membrane. The enzyme catalyses (R)-mevalonate + 2 NADP(+) + CoA = (3S)-3-hydroxy-3-methylglutaryl-CoA + 2 NADPH + 2 H(+). Its pathway is metabolic intermediate biosynthesis; (R)-mevalonate biosynthesis; (R)-mevalonate from acetyl-CoA: step 3/3. Functionally, 3-hydroxy-3-methylglutaryl coenzyme A reductase; part of the gene cluster that mediates the biosynthesis of the diterpene ent-pimara-8(14),15-diene (PD). Within the cluster, the HMG-CoA reductase AN1593 functions in the mevalonate pathway, which produces isoprenoid precursors. The geranylgeranyl pyrophosphate (GGPP) synthase AN1592 is needed in the formation of GGPP, the precursor for diterpenes. Lastly, the pimaradiene synthase pbcA performs the 2 cyclization steps that convert GGPP to ent-pimara-8(14),15-diene. The putative roles of the remaining cluster enzymes in ent-pimara-8(14),15-diene biosynthesis is unclear. The cytochrome P450 monooxygenase AN1598, the glutathione S-transferase AN1595, the oxidoreductases AN1596 and AN1597 probably function as decorative enzymes. It is possible that in biological conditions the compound is oxidized to ent-pimara-8(14),15-dien-19-oic acid, which is a bioactive diterpene compound predominant in many plant extracts. This Emericella nidulans (strain FGSC A4 / ATCC 38163 / CBS 112.46 / NRRL 194 / M139) (Aspergillus nidulans) protein is 3-hydroxy-3-methylglutaryl coenzyme A reductase AN1593.